The chain runs to 301 residues: Large ribosomal subunit protein uL18y (301 aa).

The interval 247–267 is disordered; sequence RAEPNHKKTEKSAPKEHKRYN. Positions 249 to 261 are enriched in basic and acidic residues; it reads EPNHKKTEKSAPK.

The protein belongs to the universal ribosomal protein uL18 family. In terms of assembly, component of the large ribosomal subunit (LSU).

The protein resides in the cytoplasm. The protein localises to the nucleus. Its subcellular location is the nucleolus. It is found in the nucleoplasm. Functionally, component of the ribosome, a large ribonucleoprotein complex responsible for the synthesis of proteins in the cell. The small ribosomal subunit (SSU) binds messenger RNAs (mRNAs) and translates the encoded message by selecting cognate aminoacyl-transfer RNA (tRNA) molecules. The large subunit (LSU) contains the ribosomal catalytic site termed the peptidyl transferase center (PTC), which catalyzes the formation of peptide bonds, thereby polymerizing the amino acids delivered by tRNAs into a polypeptide chain. The nascent polypeptides leave the ribosome through a tunnel in the LSU and interact with protein factors that function in enzymatic processing, targeting, and the membrane insertion of nascent chains at the exit of the ribosomal tunnel. Seems involved in the regulation of cell proliferation. Essential in leaf polarity establishment, probably having a role for translation in leaf dorsoventral patterning to specify leaf adaxial identity. This Arabidopsis thaliana (Mouse-ear cress) protein is Large ribosomal subunit protein uL18y.